The sequence spans 167 residues: uncharacterized protein (167 aa).

A coiled-coil region spans residues 28-59 (LTGIREELKADIDETRLIAESVLEEKEKKVVE).

This is an uncharacterized protein from Aquifex aeolicus (strain VF5).